Reading from the N-terminus, the 234-residue chain is MRLVQLSRHSIAFPSPEGALREPNGLLALGGDLSPARLLMAYQRGIFPWFSPGDPILWWSPDPRAVLWPESLHISRSMKRFHKRSPYRVTMNYAFGQVIEGCASDREEGTWITRGVVEAYHRLHELGHAHSIEVWREDELVAGMYGVAQGTLFCGESMFSRMENASKTALLVFCEEFIGHAGKLIDCQVLNDHTASLGACEIPRRDYLNYLNQMRLGRLPNNFWVPRCLFSPQE.

It belongs to the L/F-transferase family.

The protein resides in the cytoplasm. The enzyme catalyses N-terminal L-lysyl-[protein] + L-leucyl-tRNA(Leu) = N-terminal L-leucyl-L-lysyl-[protein] + tRNA(Leu) + H(+). The catalysed reaction is N-terminal L-arginyl-[protein] + L-leucyl-tRNA(Leu) = N-terminal L-leucyl-L-arginyl-[protein] + tRNA(Leu) + H(+). It carries out the reaction L-phenylalanyl-tRNA(Phe) + an N-terminal L-alpha-aminoacyl-[protein] = an N-terminal L-phenylalanyl-L-alpha-aminoacyl-[protein] + tRNA(Phe). Functionally, functions in the N-end rule pathway of protein degradation where it conjugates Leu, Phe and, less efficiently, Met from aminoacyl-tRNAs to the N-termini of proteins containing an N-terminal arginine or lysine. This chain is Leucyl/phenylalanyl-tRNA--protein transferase, found in Shigella flexneri serotype 5b (strain 8401).